The primary structure comprises 141 residues: Large ribosomal subunit protein uL11 (141 aa).

This sequence belongs to the universal ribosomal protein uL11 family. As to quaternary structure, part of the ribosomal stalk of the 50S ribosomal subunit. Interacts with L10 and the large rRNA to form the base of the stalk. L10 forms an elongated spine to which L12 dimers bind in a sequential fashion forming a multimeric L10(L12)X complex. Post-translationally, one or more lysine residues are methylated.

Its function is as follows. Forms part of the ribosomal stalk which helps the ribosome interact with GTP-bound translation factors. This Synechococcus sp. (strain ATCC 27144 / PCC 6301 / SAUG 1402/1) (Anacystis nidulans) protein is Large ribosomal subunit protein uL11.